The primary structure comprises 370 residues: Putative glutamate--cysteine ligase 2 (370 aa).

It belongs to the glutamate--cysteine ligase type 2 family. YbdK subfamily.

It carries out the reaction L-cysteine + L-glutamate + ATP = gamma-L-glutamyl-L-cysteine + ADP + phosphate + H(+). In terms of biological role, ATP-dependent carboxylate-amine ligase which exhibits weak glutamate--cysteine ligase activity. The polypeptide is Putative glutamate--cysteine ligase 2 (Janthinobacterium sp. (strain Marseille) (Minibacterium massiliensis)).